The chain runs to 113 residues: U11-theraphotoxin-Hhn1a (113 aa).

The first 21 residues, 1–21, serve as a signal peptide directing secretion; sequence MNTVRVTFLLVFVLAVSLGQA. The propeptide occupies 22 to 74; sequence DKDENRMEMQEKTEQGKSYLDFAENLLLQKLEELEAKLLEEDSEESRNSRQRR. The segment at 61-83 is disordered; that stretch reads EEDSEESRNSRQRRCIGEGVPCD. Disulfide bonds link C75/C90, C82/C95, and C89/C110.

Belongs to the neurotoxin 14 (magi-1) family. 01 (HNTX-16) subfamily. Expressed by the venom gland.

The protein localises to the secreted. Functionally, probable ion channel inhibitor. The sequence is that of U11-theraphotoxin-Hhn1a from Cyriopagopus hainanus (Chinese bird spider).